The following is a 552-amino-acid chain: 2,3-bisphosphoglycerate-independent phosphoglycerate mutase (552 aa).

Residues 1–25 show a composition bias toward polar residues; that stretch reads MTNTQQQSESIDDNQAQLSKQQNSD. The segment at 1-30 is disordered; sequence MTNTQQQSESIDDNQAQLSKQQNSDNNKKV. Asp38 and Ser88 together coordinate Mn(2+). Residue Ser88 is the Phosphoserine intermediate of the active site. Substrate-binding positions include His149, 179-180, Arg217, Arg223, 293-296, and Lys373; these read RD and RADR. Asp440, His444, Asp481, His482, and His500 together coordinate Mn(2+).

This sequence belongs to the BPG-independent phosphoglycerate mutase family. Monomer. Requires Mn(2+) as cofactor.

The catalysed reaction is (2R)-2-phosphoglycerate = (2R)-3-phosphoglycerate. The protein operates within carbohydrate degradation; glycolysis; pyruvate from D-glyceraldehyde 3-phosphate: step 3/5. Functionally, catalyzes the interconversion of 2-phosphoglycerate and 3-phosphoglycerate. This chain is 2,3-bisphosphoglycerate-independent phosphoglycerate mutase, found in Psychrobacter arcticus (strain DSM 17307 / VKM B-2377 / 273-4).